Here is a 284-residue protein sequence, read N- to C-terminus: 4-hydroxybenzoate octaprenyltransferase (284 aa).

The next 8 helical transmembrane spans lie at 16–36, 40–60, 91–111, 132–152, 157–177, 207–227, 231–251, and 259–279; these read PIGI…ASDG, WTLV…GCAV, LLVA…LNTL, FFAI…PMGF, NTVP…SVAY, AIIM…GWQF, IWFV…YTLI, and CFAA…GVAL.

It belongs to the UbiA prenyltransferase family. Requires Mg(2+) as cofactor.

It is found in the cell inner membrane. The catalysed reaction is all-trans-octaprenyl diphosphate + 4-hydroxybenzoate = 4-hydroxy-3-(all-trans-octaprenyl)benzoate + diphosphate. The protein operates within cofactor biosynthesis; ubiquinone biosynthesis. In terms of biological role, catalyzes the prenylation of para-hydroxybenzoate (PHB) with an all-trans polyprenyl group. Mediates the second step in the final reaction sequence of ubiquinone-8 (UQ-8) biosynthesis, which is the condensation of the polyisoprenoid side chain with PHB, generating the first membrane-bound Q intermediate 3-octaprenyl-4-hydroxybenzoate. The chain is 4-hydroxybenzoate octaprenyltransferase from Janthinobacterium sp. (strain Marseille) (Minibacterium massiliensis).